The chain runs to 425 residues: Serine--tRNA ligase (425 aa).

Position 229–231 (229–231 (TSE)) interacts with L-serine. ATP is bound by residues 259 to 261 (RKE) and Val-275. Glu-282 serves as a coordination point for L-serine. 349–352 (EVTS) lines the ATP pocket. Position 384 (Thr-384) interacts with L-serine.

This sequence belongs to the class-II aminoacyl-tRNA synthetase family. Type-1 seryl-tRNA synthetase subfamily. In terms of assembly, homodimer. The tRNA molecule binds across the dimer.

Its subcellular location is the cytoplasm. It catalyses the reaction tRNA(Ser) + L-serine + ATP = L-seryl-tRNA(Ser) + AMP + diphosphate + H(+). The enzyme catalyses tRNA(Sec) + L-serine + ATP = L-seryl-tRNA(Sec) + AMP + diphosphate + H(+). It participates in aminoacyl-tRNA biosynthesis; selenocysteinyl-tRNA(Sec) biosynthesis; L-seryl-tRNA(Sec) from L-serine and tRNA(Sec): step 1/1. Catalyzes the attachment of serine to tRNA(Ser). Is also able to aminoacylate tRNA(Sec) with serine, to form the misacylated tRNA L-seryl-tRNA(Sec), which will be further converted into selenocysteinyl-tRNA(Sec). This chain is Serine--tRNA ligase, found in Borrelia garinii subsp. bavariensis (strain ATCC BAA-2496 / DSM 23469 / PBi) (Borreliella bavariensis).